Consider the following 253-residue polypeptide: ATP synthase subunit b 1 (253 aa).

A helical transmembrane segment spans residues 2-22 (LIDWFTVIAELVNFLILVWLL).

The protein belongs to the ATPase B chain family. As to quaternary structure, F-type ATPases have 2 components, F(1) - the catalytic core - and F(0) - the membrane proton channel. F(1) has five subunits: alpha(3), beta(3), gamma(1), delta(1), epsilon(1). F(0) has four main subunits: a(1), b(2) and c(10-14). The alpha and beta chains form an alternating ring which encloses part of the gamma chain. F(1) is attached to F(0) by a central stalk formed by the gamma and epsilon chains, while a peripheral stalk is formed by the delta and b chains.

The protein localises to the cell inner membrane. Its function is as follows. F(1)F(0) ATP synthase produces ATP from ADP in the presence of a proton or sodium gradient. F-type ATPases consist of two structural domains, F(1) containing the extramembraneous catalytic core and F(0) containing the membrane proton channel, linked together by a central stalk and a peripheral stalk. During catalysis, ATP synthesis in the catalytic domain of F(1) is coupled via a rotary mechanism of the central stalk subunits to proton translocation. In terms of biological role, component of the F(0) channel, it forms part of the peripheral stalk, linking F(1) to F(0). This Prosthecochloris aestuarii (strain DSM 271 / SK 413) protein is ATP synthase subunit b 1.